Here is a 385-residue protein sequence, read N- to C-terminus: 3-hydroxyisobutyryl-CoA hydrolase, mitochondrial (385 aa).

4 residues coordinate substrate: Glu120, Gly145, Glu168, and Asp176.

The protein belongs to the enoyl-CoA hydratase/isomerase family.

It localises to the mitochondrion. It catalyses the reaction 3-hydroxy-2-methylpropanoyl-CoA + H2O = 3-hydroxy-2-methylpropanoate + CoA + H(+). Its pathway is amino-acid degradation; L-valine degradation. In terms of biological role, hydrolyzes 3-hydroxyisobutyryl-CoA (HIBYL-CoA), a saline catabolite. Has high activity toward isobutyryl-CoA. Could be an isobutyryl-CoA dehydrogenase that functions in valine catabolism. Also hydrolyzes 3-hydroxypropanoyl-CoA. The polypeptide is 3-hydroxyisobutyryl-CoA hydrolase, mitochondrial (hibch) (Xenopus tropicalis (Western clawed frog)).